We begin with the raw amino-acid sequence, 344 residues long: Cyclin-G2 (344 aa).

Over residues 301–313 (ESESEDSCEDMSC) the composition is skewed to acidic residues. The tract at residues 301–320 (ESESEDSCEDMSCGEESLSS) is disordered.

The protein belongs to the cyclin family. Cyclin G subfamily. In terms of tissue distribution, high levels in cerebellum, thymus, spleen and prostate. Low levels in skeletal muscle.

It localises to the cytoplasm. In terms of biological role, may play a role in growth regulation and in negative regulation of cell cycle progression. This Homo sapiens (Human) protein is Cyclin-G2 (CCNG2).